A 561-amino-acid chain; its full sequence is Liver carboxylesterase 1F (561 aa).

A signal peptide spans 1 to 18 (MCLSFLFLVSLATCVVYG). Residue Asn-79 is glycosylated (N-linked (GlcNAc...) asparagine). The cysteines at positions 87 and 116 are disulfide-linked. Ser-221 (acyl-ester intermediate) is an active-site residue. The cysteines at positions 273 and 284 are disulfide-linked. Catalysis depends on charge relay system residues Glu-353 and His-466. The Prevents secretion from ER motif lies at 558-561 (HNEL).

Belongs to the type-B carboxylesterase/lipase family. In terms of tissue distribution, expressed in liver and kidney.

It localises to the lipid droplet. The protein localises to the cytoplasm. The protein resides in the cytosol. Its subcellular location is the endoplasmic reticulum. It is found in the microsome. The catalysed reaction is a carboxylic ester + H2O = an alcohol + a carboxylate + H(+). It carries out the reaction all-trans-retinyl hexadecanoate + H2O = all-trans-retinol + hexadecanoate + H(+). Involved in the detoxification of xenobiotics and in the activation of ester and amide prodrugs. Hydrolyzes retinyl esters. Hydrolyzes p-nitrophenyl butyrate (PNPB), triacylglycerol and monoacylglycerol. Shows higher activity against PNPB, a short-chain fatty acid ester, than against triolein, a long-chain fatty acid ester. Shows no detectable activity against diacylglycerol, cholesterol ester or phospholipids. May play a role in adipocyte lipolysis. This Rattus norvegicus (Rat) protein is Liver carboxylesterase 1F.